Reading from the N-terminus, the 304-residue chain is Ribosomal RNA large subunit methyltransferase F (304 aa).

Belongs to the methyltransferase superfamily. METTL16/RlmF family.

The protein localises to the cytoplasm. It carries out the reaction adenosine(1618) in 23S rRNA + S-adenosyl-L-methionine = N(6)-methyladenosine(1618) in 23S rRNA + S-adenosyl-L-homocysteine + H(+). Specifically methylates the adenine in position 1618 of 23S rRNA. The protein is Ribosomal RNA large subunit methyltransferase F of Klebsiella pneumoniae (strain 342).